We begin with the raw amino-acid sequence, 183 residues long: UPF0200 protein MmarC7_0527 (183 aa).

8–15 (GMPGSGKS) is a binding site for ATP.

It belongs to the UPF0200 family.

This is UPF0200 protein MmarC7_0527 from Methanococcus maripaludis (strain C7 / ATCC BAA-1331).